The following is a 142-amino-acid chain: Group IIE secretory phospholipase A2 (142 aa).

Residues 1–19 (MKSPHVLVFLCLLVALVTG) form the signal peptide. 5 residues coordinate Ca(2+): Asp41, Gly43, Tyr45, Gly47, and Gly49. 7 disulfide bridges follow: Cys44-Cys135, Cys46-Cys62, Cys61-Cys115, Cys67-Cys142, Cys68-Cys108, Cys77-Cys101, and Cys95-Cys106. Residue His65 is part of the active site. Asp66 is a Ca(2+) binding site. Asp109 is a catalytic residue. Tyr130 and Asn132 together coordinate Ca(2+).

The protein belongs to the phospholipase A2 family. It depends on Ca(2+) as a cofactor. Restricted to the brain, heart, lung, and placenta.

It localises to the secreted. The protein localises to the cytoplasm. The enzyme catalyses a 1,2-diacyl-sn-glycero-3-phosphoethanolamine + H2O = a 1-acyl-sn-glycero-3-phosphoethanolamine + a fatty acid + H(+). The catalysed reaction is 1-hexadecanoyl-2-(9Z-octadecenoyl)-sn-glycero-3-phosphoethanolamine + H2O = 1-hexadecanoyl-sn-glycero-3-phosphoethanolamine + (9Z)-octadecenoate + H(+). It catalyses the reaction 1-hexadecanoyl-2-(9Z,12Z-octadecadienoyl)-sn-glycero-3-phosphoethanolamine + H2O = 1-hexadecanoyl-sn-glycero-3-phosphoethanolamine + (9Z,12Z)-octadecadienoate + H(+). It carries out the reaction 1-hexadecanoyl-2-(5Z,8Z,11Z,14Z-eicosatetraenoyl)-sn-glycero-3-phosphoethanolamine + H2O = 1-hexadecanoyl-sn-glycero-3-phosphoethanolamine + (5Z,8Z,11Z,14Z)-eicosatetraenoate + H(+). The enzyme catalyses 1,2-dihexadecanoyl-sn-glycero-3-phospho-(1'-sn-glycerol) + H2O = 1-hexadecanoyl-sn-glycero-3-phospho-(1'-sn-glycerol) + hexadecanoate + H(+). The catalysed reaction is 1-hexadecanoyl-2-(9Z-octadecenoyl)-sn-glycero-3-phosphoglycerol + H2O = 1-hexadecanoyl-sn-glycero-3-phosphoglycerol + (9Z)-octadecenoate + H(+). It catalyses the reaction a 1,2-diacyl-sn-glycero-3-phosphocholine + H2O = a 1-acyl-sn-glycero-3-phosphocholine + a fatty acid + H(+). It carries out the reaction 1,2-dihexadecanoyl-sn-glycero-3-phosphocholine + H2O = 1-hexadecanoyl-sn-glycero-3-phosphocholine + hexadecanoate + H(+). The enzyme catalyses 1-hexadecanoyl-2-(9Z-octadecenoyl)-sn-glycero-3-phosphocholine + H2O = 1-hexadecanoyl-sn-glycero-3-phosphocholine + (9Z)-octadecenoate + H(+). The catalysed reaction is 1-hexadecanoyl-2-(9Z,12Z-octadecadienoyl)-sn-glycero-3-phosphocholine + H2O = (9Z,12Z)-octadecadienoate + 1-hexadecanoyl-sn-glycero-3-phosphocholine + H(+). It catalyses the reaction 1-hexadecanoyl-2-(4Z,7Z,10Z,13Z,16Z,19Z-docosahexaenoyl)-sn-glycero-3-phosphocholine + H2O = (4Z,7Z,10Z,13Z,16Z,19Z)-docosahexaenoate + 1-hexadecanoyl-sn-glycero-3-phosphocholine + H(+). Secretory calcium-dependent phospholipase A2 that primarily targets extracellular phospholipids. Hydrolyzes the ester bond of the fatty acyl group attached at sn-2 position of phospholipids (phospholipase A2 activity), releasing various unsaturated fatty acids including oleoate, linoleoate, arachidonate, docosahexaenoate and lysophosphatidylethanolamines in preference to lysophosphatidylcholines. In response to high-fat diet, hydrolyzes minor lipoprotein phospholipids including phosphatidylserines, phosphatidylinositols and phosphatidylglycerols, altering lipoprotein composition and fat storage in adipose tissue and liver. May act in an autocrine and paracrine manner. Contributes to lipid remodeling of cellular membranes and generation of lipid mediators involved in pathogen clearance. Cleaves sn-2 fatty acyl chains of phosphatidylglycerols and phosphatidylethanolamines, which are major components of membrane phospholipids in bacteria. Acts as a hair follicle phospholipase A2. Selectively releases lysophosphatidylethanolamines (LPE) and various unsaturated fatty acids in skin to regulate hair follicle homeostasis. May regulate the inflammatory response by releasing arachidonate, a precursor of prostaglandins and leukotrienes. Upon allergen exposure, may participate in allergic inflammatory response by enhancing leukotriene C4 synthesis and degranulation in mast cells. The sequence is that of Group IIE secretory phospholipase A2 (PLA2G2E) from Homo sapiens (Human).